The sequence spans 282 residues: tRNA (guanine-N(1)-)-methyltransferase (282 aa).

S-adenosyl-L-methionine is bound by residues glycine 157 and 177–182; that span reads VGDYIL.

The protein belongs to the RNA methyltransferase TrmD family. As to quaternary structure, homodimer.

The protein resides in the cytoplasm. It carries out the reaction guanosine(37) in tRNA + S-adenosyl-L-methionine = N(1)-methylguanosine(37) in tRNA + S-adenosyl-L-homocysteine + H(+). Functionally, specifically methylates guanosine-37 in various tRNAs. The chain is tRNA (guanine-N(1)-)-methyltransferase from Rickettsia bellii (strain RML369-C).